Here is an 81-residue protein sequence, read N- to C-terminus: Sulfur carrier protein TusA (81 aa).

The active-site Cysteine persulfide intermediate is C19.

Belongs to the sulfur carrier protein TusA family.

The protein resides in the cytoplasm. Its function is as follows. Sulfur carrier protein which probably makes part of a sulfur-relay system. The polypeptide is Sulfur carrier protein TusA (Vibrio vulnificus (strain CMCP6)).